Consider the following 609-residue polypeptide: Arginine--tRNA ligase (609 aa).

Residues 132–142 (ANPTSSLHVGH) carry the 'HIGH' region motif.

It belongs to the class-I aminoacyl-tRNA synthetase family. Monomer.

It is found in the cytoplasm. It catalyses the reaction tRNA(Arg) + L-arginine + ATP = L-arginyl-tRNA(Arg) + AMP + diphosphate. The protein is Arginine--tRNA ligase of Psychrobacter cryohalolentis (strain ATCC BAA-1226 / DSM 17306 / VKM B-2378 / K5).